The chain runs to 70 residues: Small ribosomal subunit protein bS21 (70 aa).

The protein belongs to the bacterial ribosomal protein bS21 family.

The sequence is that of Small ribosomal subunit protein bS21 from Nautilia profundicola (strain ATCC BAA-1463 / DSM 18972 / AmH).